Consider the following 276-residue polypeptide: Large ribosomal subunit protein uL2 (276 aa).

Disordered regions lie at residues 37–59 (QFQK…GGHK) and 224–276 (VAMN…RHKR). The segment covering 50-59 (TTRHKGGGHK) has biased composition (basic residues).

The protein belongs to the universal ribosomal protein uL2 family. As to quaternary structure, part of the 50S ribosomal subunit. Forms a bridge to the 30S subunit in the 70S ribosome.

One of the primary rRNA binding proteins. Required for association of the 30S and 50S subunits to form the 70S ribosome, for tRNA binding and peptide bond formation. It has been suggested to have peptidyltransferase activity; this is somewhat controversial. Makes several contacts with the 16S rRNA in the 70S ribosome. The protein is Large ribosomal subunit protein uL2 of Ralstonia nicotianae (strain ATCC BAA-1114 / GMI1000) (Ralstonia solanacearum).